We begin with the raw amino-acid sequence, 495 residues long: MEPVQKLQIPYKSIRLSDGTEYQSYHTEGALSGKQPADYKNGIPAFRKEWIQKRFNHSNHSQMYFAKKGIITEEMRYAAFRENMEPEFVRSEIACGRAILPSNRNHPELEPMIIGKNFLVKINANIGNSTFSSSIEEEVEKLHWAIKWGADTVMDLSTGKNIHETREWILRNSPVPIGTVPIYQALEKVKGKTENLNIQIFLETLEEQAEQGVDYFTIHAGVLLRYIPLTTNRITGIVSRGGSILAKWCQAHHKENFLYTHFDEILKVMKKYGVSISLGDGLRPGSIADANDKAQFSELETLGELTQLAWKEDIQVMIEGPGHVPMNLIKENVDLQTKICQEAPFYTLGPIVTDIAPGYDHITSAIGAAMIGWYGTAMLCYVTPKEHLGLPNKEDVKQGVIAYKIAAHAADLAKGHPGAIDRDNLLSKARFEFRWEDQFSLSLDPETAKTFHDEMLPQDRMKTAHFCSMCGPHFCSMNLTQELRKFAQEKEIQES.

Residues N125, M154, Y183, H219, 239–241 (SRG), 280–283 (DGLR), and E319 each bind substrate. H323 serves as a coordination point for Zn(2+). Y346 contributes to the substrate binding site. Position 387 (H387) interacts with Zn(2+). The [4Fe-4S] cluster site is built by C467, C470, and C475.

It belongs to the ThiC family. [4Fe-4S] cluster serves as cofactor.

The enzyme catalyses 5-amino-1-(5-phospho-beta-D-ribosyl)imidazole + S-adenosyl-L-methionine = 4-amino-2-methyl-5-(phosphooxymethyl)pyrimidine + CO + 5'-deoxyadenosine + formate + L-methionine + 3 H(+). Its pathway is cofactor biosynthesis; thiamine diphosphate biosynthesis. In terms of biological role, catalyzes the synthesis of the hydroxymethylpyrimidine phosphate (HMP-P) moiety of thiamine from aminoimidazole ribotide (AIR) in a radical S-adenosyl-L-methionine (SAM)-dependent reaction. The polypeptide is Phosphomethylpyrimidine synthase (Leptospira interrogans serogroup Icterohaemorrhagiae serovar Lai (strain 56601)).